Consider the following 116-residue polypeptide: Omega-ctenitoxin-Pn3a (116 aa).

A signal peptide spans 1 to 19 (MKMKLLGIILLVSFPFVLG). Residues 20–38 (FAGIPIEEGENSVEVGEVE) constitute a propeptide that is removed on maturation. Cystine bridges form between Cys-41-Cys-58, Cys-48-Cys-64, Cys-55-Cys-90, Cys-57-Cys-78, Cys-66-Cys-76, Cys-96-Cys-102, and Cys-106-Cys-111. A Histidine amide modification is found at His-115.

It belongs to the neurotoxin 04 (omega-agtx) family. 03 (type II/III omega-agtx) subfamily. In terms of tissue distribution, expressed by the venom gland.

It localises to the secreted. In terms of biological role, this toxin is a potent and practically irreversible antagonist of both Cav2.1/CACNA1A and Cav2.2/CACNA1B calcium channels, while it displays a partial and rapidly reversible block of Cav2.3/CACNA1E calcium channels and no effect on Cav3/CACNA1 calcium channels. Inhibits glutamate uptake from rat brain synaptosomes by an interaction between cysteines from both glutamate transporter and toxin. Blocks potassium-induced exocytosis of synaptic vesicles in brain cortical synaptosomes (IC(50)=1.1 nM). In rat brain, inhibits glutamate release, neuronal death and loss of neurotransmission in the hippocampus resulting from ischemia. In vivo, induces rapid general flaccid paralysis followed by death in 10-30 minutes at dose levels of 5 ug per mouse. The sequence is that of Omega-ctenitoxin-Pn3a from Phoneutria nigriventer (Brazilian armed spider).